The sequence spans 343 residues: Tetraacyldisaccharide 4'-kinase (343 aa).

51-58 contributes to the ATP binding site; it reads TVGGAGKT.

Belongs to the LpxK family.

The enzyme catalyses a lipid A disaccharide + ATP = a lipid IVA + ADP + H(+). Its pathway is glycolipid biosynthesis; lipid IV(A) biosynthesis; lipid IV(A) from (3R)-3-hydroxytetradecanoyl-[acyl-carrier-protein] and UDP-N-acetyl-alpha-D-glucosamine: step 6/6. Functionally, transfers the gamma-phosphate of ATP to the 4'-position of a tetraacyldisaccharide 1-phosphate intermediate (termed DS-1-P) to form tetraacyldisaccharide 1,4'-bis-phosphate (lipid IVA). The polypeptide is Tetraacyldisaccharide 4'-kinase (Xanthobacter autotrophicus (strain ATCC BAA-1158 / Py2)).